The chain runs to 211 residues: MGVRAQQKERTRRSLVEAAFSQLSAERSFASLSLREVAREAGIAPTSFYRHFRDVDELGLTMVDESGLMLRQLMRQARQRIAKGGSVIRTSVSTFMEFIGNNPNAFRLLLRERSGTSAAFRAAVAREIQHFIAELADYLELENHMPRAFTEAQAEAMVTIVFSAGAEALDVSPEQRGQLEERLVLQLRMISKGAYYWYRREQEKMAQNSDK.

Residues 10–70 (RTRRSLVEAA…TMVDESGLML (61 aa)) enclose the HTH tetR-type domain. Positions 33–52 (SLREVAREAGIAPTSFYRHF) form a DNA-binding region, H-T-H motif.

As to quaternary structure, homodimer.

The protein localises to the cytoplasm. Functionally, represses the transcription of fabB, involved in unsaturated fatty acid (UFA) biosynthesis. By controlling UFA production, FabR directly influences the physical properties of the membrane bilayer. In Cronobacter sakazakii (strain ATCC BAA-894) (Enterobacter sakazakii), this protein is HTH-type transcriptional repressor FabR.